The chain runs to 732 residues: Exonuclease 1 (732 aa).

Residues 1 to 99 (MGITGLIPFV…KRRRDSRKQS (99 aa)) form an N-domain region. Residues D30, D78, E150, D152, D171, D173, and D226 each contribute to the Mg(2+) site. Positions 138 to 230 (RSRNVDCIVA…ILSGCDYLDS (93 aa)) are I-domain. 3 disordered regions span residues 422-471 (YSFK…QRSP), 524-625 (DEQT…TNST), and 661-716 (SCSS…VSQN). Phosphoserine occurs at positions 431 and 433. The segment covering 432-442 (PSREDSVDQER) has biased composition (basic and acidic residues). T443 bears the Phosphothreonine mark. S447 is modified (phosphoserine). Composition is skewed to basic and acidic residues over residues 457–467 (FAKERTGEEAN) and 525–537 (EQTR…LRDT). 2 stretches are compositionally biased toward polar residues: residues 572–593 (RCSS…SLLE) and 608–625 (DLNN…TNST). A compositionally biased stretch (low complexity) spans 661-677 (SCSSDQRASSTSSSSQQ). The span at 703–716 (KSRTNGKLGAVSQN) shows a compositional bias: polar residues.

This sequence belongs to the XPG/RAD2 endonuclease family. EXO1 subfamily. Mg(2+) is required as a cofactor. In terms of tissue distribution, specifically expressed in the female germline.

Its subcellular location is the nucleus. 5'-&gt;3' double-stranded DNA exonuclease which may also contain a cryptic 3'-&gt;5' double-stranded DNA exonuclease activity. Also exhibits endonuclease activity against 5'-overhanging flap structures similar to those generated by displacement synthesis when DNA polymerase encounters the 5'-end of a downstream Okazaki fragment. Required for DNA mismatch repair (MMR). The protein is Exonuclease 1 (tos) of Drosophila melanogaster (Fruit fly).